A 417-amino-acid polypeptide reads, in one-letter code: BSD domain-containing protein 1-B (417 aa).

The 53-residue stretch at 153–205 (WLAYWDPEQRKAEISEPLVTSPSIRALFTKMVPAAVSHSEFWQRYFYKVHQLE) folds into the BSD domain. Disordered regions lie at residues 215–234 (KQRANQSVHSEEPKWEEEEE), 262–292 (HVEDKSEKTAELNRDHTSVTSPSESSESISP), and 323–390 (AAET…DFDM). The segment covering 262 to 278 (HVEDKSEKTAELNRDHT) has biased composition (basic and acidic residues). Low complexity predominate over residues 281–292 (TSPSESSESISP). The span at 332–343 (PVEQTGKSNAQM) shows a compositional bias: polar residues. Positions 345–356 (THREDPPSDLRV) are enriched in basic and acidic residues. Polar residues predominate over residues 360-379 (NSDSGKSTPSNNGQKGSSTD). Residues 380 to 390 (VSEDWEKDFDM) are compositionally biased toward acidic residues.

The sequence is that of BSD domain-containing protein 1-B (bsdc1-b) from Xenopus laevis (African clawed frog).